The sequence spans 692 residues: MSSFEGQMAEYPTISIDRFDRENLRARAYFLSHCHKDHMKGLRAPTLKRRLECSLKVYLYCSPVTKELLLTSPKYRFWKKRIISIEIETPTQISLVDEASGEKEEIVVTLLPAGHCPGSVMFLFQGNNGTVLYTGDFRLAQGEAARMELLHSGGRVKDIQSVYLDTTFCDPRFYQIPSREECLSGVLELVRSWITRSPYHVVWLNCKAAYGYEYLFTNLSEELGVQVHVNKLDMFRNMPEILHHLTTDRNTQIHACRHPKAEEYFQWSKLPCGITSRNRIPLHIISIKPSTMWFGERSRKTNVIVRTGESSYRACFSFHSSYSEIKDFLSYLCPVNAYPNVIPVGTTMDKVVEILKPLCRSSQSTEPKYKPLGKLKRARTVHRDSEEEDDYLFDDPLPIPLRHKVPYPETFHPEVFSMTAVSEKQPEKLRQTPGCCRAECMQSSRFTNFVDCEESNSESEEEVGIPASLQGDLGSVLHLQKADGDVPQWEVFFKRNDEITDESLENFPSSTVAGGSQSPKLFSDSDGESTHISSQNSSQSTHITEQGSQGWDSQSDTVLLSSQERNSGDITSLDKADYRPTIKENIPASLMEQNVICPKDTYSDLKSRDKDVTIVPSTGEPTTLSSETHIPEEKSLLNLSTNADSQSSSDFEVPSTPEAELPKREHLQYLYEKLATGESIAVKKRKCSLLDT.

Threonine 380 is modified (phosphothreonine). Residue serine 385 is modified to Phosphoserine. 2 disordered regions span residues 504 to 555 (LENF…DSQS) and 640 to 664 (STNADSQSSSDFEVPSTPEAELPKR). Residues 506–520 (NFPSSTVAGGSQSPK) are compositionally biased toward polar residues. Positions 530-543 (THISSQNSSQSTHI) are enriched in low complexity. Composition is skewed to polar residues over residues 544-555 (TEQGSQGWDSQS) and 640-650 (STNADSQSSSD). Serine 645 bears the Phosphoserine; by ATM mark.

This sequence belongs to the DNA repair metallo-beta-lactamase (DRMBL) family. In terms of assembly, interacts with LIG4; the interaction is direct. Interacts with ATM. Interacts with BRCA1. Interacts with PRKDC. Interacts with TP53BP1. Also exhibits ATM- and phosphorylation-dependent interaction with the MRN complex, composed of MRE11, RAD50, and NBN. In terms of processing, phosphorylation on undefined residues by PRKDC may stimulate endonucleolytic activity on 5' and 3' hairpins and overhangs. PRKDC must remain present, even after phosphorylation, for efficient hairpin opening. Also phosphorylated by ATM in response to ionizing radiation (IR) and by ATR in response to ultraviolet (UV) radiation. In terms of tissue distribution, ubiquitously expressed, with highest levels in the kidney, lung, pancreas and placenta (at the mRNA level). Expression is not increased in thymus or bone marrow, sites of V(D)J recombination.

Its subcellular location is the nucleus. Functionally, nuclease involved in DNA non-homologous end joining (NHEJ); required for double-strand break repair and V(D)J recombination. Required for V(D)J recombination, the process by which exons encoding the antigen-binding domains of immunoglobulins and T-cell receptor proteins are assembled from individual V, (D), and J gene segments. V(D)J recombination is initiated by the lymphoid specific RAG endonuclease complex, which generates site specific DNA double strand breaks (DSBs). These DSBs present two types of DNA end structures: hairpin sealed coding ends and phosphorylated blunt signal ends. These ends are independently repaired by the non homologous end joining (NHEJ) pathway to form coding and signal joints respectively. This protein exhibits single-strand specific 5'-3' exonuclease activity in isolation and acquires endonucleolytic activity on 5' and 3' hairpins and overhangs when in a complex with PRKDC. The latter activity is required specifically for the resolution of closed hairpins prior to the formation of the coding joint. Also required for the repair of complex DSBs induced by ionizing radiation, which require substantial end-processing prior to religation by NHEJ. The polypeptide is Protein artemis (Homo sapiens (Human)).